A 374-amino-acid chain; its full sequence is tRNA (guanine(26)-N(2))-dimethyltransferase (374 aa).

The Trm1 methyltransferase domain occupies isoleucine 4–isoleucine 368. S-adenosyl-L-methionine is bound by residues arginine 41, arginine 66, aspartate 82, aspartate 108, and alanine 109. Zn(2+) is bound by residues cysteine 237, cysteine 240, cysteine 256, and cysteine 259.

The protein belongs to the class I-like SAM-binding methyltransferase superfamily. Trm1 family.

The catalysed reaction is guanosine(26) in tRNA + 2 S-adenosyl-L-methionine = N(2)-dimethylguanosine(26) in tRNA + 2 S-adenosyl-L-homocysteine + 2 H(+). In terms of biological role, dimethylates a single guanine residue at position 26 of a number of tRNAs using S-adenosyl-L-methionine as donor of the methyl groups. This chain is tRNA (guanine(26)-N(2))-dimethyltransferase, found in Methanoregula boonei (strain DSM 21154 / JCM 14090 / 6A8).